The sequence spans 225 residues: Histone H3-like centromeric protein cid (225 aa).

Residues 1–11 (MPRHSRAKRAP) are compositionally biased toward basic residues. The interval 1 to 131 (MPRHSRAKRA…KAANPMSRAK (131 aa)) is disordered. Positions 43-52 (FTTSQLTLQD) are enriched in polar residues. S74 and S75 each carry phosphoserine. A Phosphothreonine modification is found at T76. S77 carries the post-translational modification Phosphoserine. Over residues 86 to 103 (RYPTTRSPQTRRMTVQQE) the composition is skewed to polar residues. Positions 133 to 225 (MDREIRRLQH…AYICDRGRQF (93 aa)) are H3-like.

Belongs to the histone H3 family. As to quaternary structure, forms a nucleosome-like histone octamer containing two molecules each of H2A, H2B, cid and H4 assembled in one cid-H4 heterotetramer and two H2A-H2B heterodimers. The cid-H4 heterotetramer is more compact and structurally more rigid than corresponding H3-H4 heterotetramers. Interacts with the condensin subunit Cap-G. Interacts with Chrac-14.

The protein resides in the nucleus. It localises to the chromosome. It is found in the centromere. Its subcellular location is the kinetochore. In terms of biological role, histone H3-like variant which exclusively replaces conventional H3 in the nucleosome core of centromeric chromatin at the inner plate of the kinetochore. Required for recruitment and assembly of kinetochore proteins, mitotic progression and chromosome segregation. May serve as an epigenetic mark that propagates centromere identity through replication and cell division. In Drosophila melanogaster (Fruit fly), this protein is Histone H3-like centromeric protein cid.